A 301-amino-acid polypeptide reads, in one-letter code: UDP-N-acetylenolpyruvoylglucosamine reductase (301 aa).

The 168-residue stretch at 26-193 folds into the FAD-binding PCMH-type domain; sequence KTGGPAQYLA…VSATFGLEPG (168 aa). R172 is a catalytic residue. The Proton donor role is filled by S222. The active site involves E292.

This sequence belongs to the MurB family. FAD serves as cofactor.

The protein localises to the cytoplasm. It catalyses the reaction UDP-N-acetyl-alpha-D-muramate + NADP(+) = UDP-N-acetyl-3-O-(1-carboxyvinyl)-alpha-D-glucosamine + NADPH + H(+). It functions in the pathway cell wall biogenesis; peptidoglycan biosynthesis. Its function is as follows. Cell wall formation. The polypeptide is UDP-N-acetylenolpyruvoylglucosamine reductase (Lactobacillus johnsonii (strain CNCM I-12250 / La1 / NCC 533)).